Here is a 201-residue protein sequence, read N- to C-terminus: Large ribosomal subunit protein uL4 (201 aa).

Positions 44–71 (RAQKTRAEVTGSGKKPWRQKGTGRARSG) are disordered.

It belongs to the universal ribosomal protein uL4 family. Part of the 50S ribosomal subunit.

In terms of biological role, one of the primary rRNA binding proteins, this protein initially binds near the 5'-end of the 23S rRNA. It is important during the early stages of 50S assembly. It makes multiple contacts with different domains of the 23S rRNA in the assembled 50S subunit and ribosome. Its function is as follows. Forms part of the polypeptide exit tunnel. In Pectobacterium carotovorum subsp. carotovorum (strain PC1), this protein is Large ribosomal subunit protein uL4.